We begin with the raw amino-acid sequence, 193 residues long: uncharacterized protein (193 aa).

The segment at 55–94 is disordered; that stretch reads PVGGAAGARSLSQALPAPAPPPPPPPGLGPSSERPWPSPW. Positions 71–82 are enriched in pro residues; it reads APAPPPPPPPGL.

This is an uncharacterized protein from Homo sapiens (Human).